The sequence spans 383 residues: Cytochrome b (383 aa).

Helical transmembrane passes span 35 to 55 (FGSI…ILSM), 79 to 100 (WLFR…YIHI), 115 to 135 (WGIG…GYVL), and 180 to 200 (FFSL…LHLF). Residues His85 and His99 each contribute to the heme b site. Heme b is bound by residues His184 and His198. A ubiquinone is bound at residue His203. 4 helical membrane passes run 228–248 (IKDL…NFQF), 290–310 (LGGV…IFYN), 321–341 (LNKI…WLGK), and 348–368 (FTNI…LNFY).

The protein belongs to the cytochrome b family. As to quaternary structure, the main subunits of complex b-c1 are: cytochrome b, cytochrome c1 and the Rieske protein. The cofactor is heme b.

Its subcellular location is the mitochondrion inner membrane. In terms of biological role, component of the ubiquinol-cytochrome c reductase complex (complex III or cytochrome b-c1 complex) that is part of the mitochondrial respiratory chain. The b-c1 complex mediates electron transfer from ubiquinol to cytochrome c. Contributes to the generation of a proton gradient across the mitochondrial membrane that is then used for ATP synthesis. The protein is Cytochrome b (MT-CYB) of Apis mellifera ligustica (Common honeybee).